The primary structure comprises 39 residues: Large ribosomal subunit protein bL12 (39 aa).

Belongs to the bacterial ribosomal protein bL12 family. As to quaternary structure, homodimer. Part of the ribosomal stalk of the 50S ribosomal subunit. Forms a multimeric L10(L12)X complex, where L10 forms an elongated spine to which 2 to 4 L12 dimers bind in a sequential fashion. Binds GTP-bound translation factors.

Forms part of the ribosomal stalk which helps the ribosome interact with GTP-bound translation factors. Is thus essential for accurate translation. This chain is Large ribosomal subunit protein bL12 (rplL), found in Arthrobacter glacialis.